Consider the following 104-residue polypeptide: Seminal ribonuclease (104 aa).

4 disulfide bridges follow: Cys-12–Cys-70, Cys-26–Cys-81, Cys-44–Cys-96, and Cys-51–Cys-58. Substrate-binding positions include 27–31 (KPVNT), Lys-52, and Arg-71.

This sequence belongs to the pancreatic ribonuclease family. Homodimer; disulfide-linked.

The protein resides in the secreted. It catalyses the reaction an [RNA] containing cytidine + H2O = an [RNA]-3'-cytidine-3'-phosphate + a 5'-hydroxy-ribonucleotide-3'-[RNA].. The enzyme catalyses an [RNA] containing uridine + H2O = an [RNA]-3'-uridine-3'-phosphate + a 5'-hydroxy-ribonucleotide-3'-[RNA].. This is Seminal ribonuclease (SRN) from Saiga tatarica (Saiga antelope).